Reading from the N-terminus, the 628-residue chain is Patulin synthase (628 aa).

An N-terminal signal peptide occupies residues Met-1–Ala-20. N-linked (GlcNAc...) asparagine glycosylation is present at Asn-48. Residues Thr-60–Ala-61 and Glu-81–Ala-82 contribute to the FAD site. Asn-92 carries an N-linked (GlcNAc...) asparagine glycan. Asn-147–Ala-150 is an FAD binding site. 5 N-linked (GlcNAc...) asparagine glycosylation sites follow: Asn-197, Asn-260, Asn-386, Asn-429, and Asn-486. His-564 (proton acceptor) is an active-site residue. FAD contacts are provided by residues Ala-598 and Pro-609–Gln-610.

It belongs to the GMC oxidoreductase family. As to quaternary structure, homodimer. It depends on FAD as a cofactor.

The protein resides in the cytoplasm. It localises to the cell cortex. It is found in the vacuole. The protein localises to the secreted. Its subcellular location is the cell wall. The catalysed reaction is (E)-ascladiol + A = patulin + AH2. It functions in the pathway mycotoxin biosynthesis; patulin biosynthesis. In terms of biological role, patulin synthase; part of the gene cluster that mediates the biosynthesis of patulin, an acetate-derived tetraketide mycotoxin produced by several fungal species that shows antimicrobial properties against several bacteria. PatE catalyzes the last step of the pathway which is the conversion of E-ascladiol to patulin. The pathway begins with the synthesis of 6-methylsalicylic acid by the polyketide synthase (PKS) patK via condensation of acetate and malonate units. The 6-methylsalicylic acid decarboxylase patG then catalyzes the decarboxylation of 6-methylsalicylic acid to yield m-cresol (also known as 3-methylphenol). These first reactions occur in the cytosol. The intermediate m-cresol is then transported into the endoplasmic reticulum where the cytochrome P450 monooxygenase patH converts it to m-hydroxybenzyl alcohol, which is further converted to gentisyl alcohol by the cytochrome P450 monooxygenase patI. The oxidoreductases patJ and patO further convert gentisyl alcohol to isoepoxydon in the vacuole. PatN catalyzes then the transformation of isoepoxydon into phyllostine. The cluster protein patF is responsible for the conversion from phyllostine to neopatulin whereas the alcohol dehydrogenase patD converts neopatulin to E-ascladiol. The steps between isoepoxydon and E-ascladiol occur in the cytosol, and E-ascladiol is probably secreted to the extracellular space by one of the cluster-specific transporters patC or patM. Finally, the secreted patulin synthase patE catalyzes the conversion of E-ascladiol to patulin. In Aspergillus clavatus (strain ATCC 1007 / CBS 513.65 / DSM 816 / NCTC 3887 / NRRL 1 / QM 1276 / 107), this protein is Patulin synthase.